An 873-amino-acid chain; its full sequence is Protein translocase subunit SecA (873 aa).

ATP contacts are provided by residues Q85, 103 to 107, and D492; that span reads GEGKT. Residues 835–856 are compositionally biased toward basic and acidic residues; it reads RYAEEEGKQPIRKENQIGRNDD. A disordered region spans residues 835 to 873; it reads RYAEEEGKQPIRKENQIGRNDDCPCGSGKKYKKCCGKNA. Residues C857, C859, C868, and C869 each coordinate Zn(2+). The segment covering 863–873 has biased composition (basic residues); it reads KKYKKCCGKNA.

This sequence belongs to the SecA family. As to quaternary structure, monomer and homodimer. Part of the essential Sec protein translocation apparatus which comprises SecA, SecYEG and auxiliary proteins SecDF. Other proteins may also be involved. Zn(2+) serves as cofactor.

The protein localises to the cell membrane. It is found in the cytoplasm. The enzyme catalyses ATP + H2O + cellular proteinSide 1 = ADP + phosphate + cellular proteinSide 2.. Its function is as follows. Part of the Sec protein translocase complex. Interacts with the SecYEG preprotein conducting channel. Has a central role in coupling the hydrolysis of ATP to the transfer of proteins into and across the cell membrane, serving as an ATP-driven molecular motor driving the stepwise translocation of polypeptide chains across the membrane. This chain is Protein translocase subunit SecA, found in Desulforamulus reducens (strain ATCC BAA-1160 / DSM 100696 / MI-1) (Desulfotomaculum reducens).